The sequence spans 400 residues: F-box/kelch-repeat protein At4g19870 (400 aa).

The segment covering 1-10 has biased composition (basic and acidic residues); that stretch reads MKRQAKPPEK. A disordered region spans residues 1-33; sequence MKRQAKPPEKKTKRTTNASSPTPSSSSPSLSSL. Over residues 19–33 the composition is skewed to low complexity; sequence SSPTPSSSSPSLSSL. Positions 27–73 constitute an F-box domain; sequence SPSLSSLPDEIVENCLARISRSYYPTLSIVSKSFRSIISSTELYVAR. Kelch repeat units follow at residues 146–192, 194–240, and 242–284; these read EIYV…LYDG, IYVI…RIAE, and EGKI…SVLY.

The polypeptide is F-box/kelch-repeat protein At4g19870 (Arabidopsis thaliana (Mouse-ear cress)).